Consider the following 382-residue polypeptide: Mannitol-1-phosphate 5-dehydrogenase (382 aa).

Residue 3-14 (ALHFGAGNIGRG) participates in NAD(+) binding. Lys269 is modified (N6-acetyllysine).

Belongs to the mannitol dehydrogenase family. As to quaternary structure, monomer.

It catalyses the reaction D-mannitol 1-phosphate + NAD(+) = beta-D-fructose 6-phosphate + NADH + H(+). The protein is Mannitol-1-phosphate 5-dehydrogenase of Escherichia coli O157:H7.